The chain runs to 82 residues: ATP synthase subunit c (82 aa).

Transmembrane regions (helical) follow at residues 7–27 (AASV…PGIG) and 57–77 (FAFM…LLFA).

It belongs to the ATPase C chain family. As to quaternary structure, F-type ATPases have 2 components, F(1) - the catalytic core - and F(0) - the membrane proton channel. F(1) has five subunits: alpha(3), beta(3), gamma(1), delta(1), epsilon(1). F(0) has four main subunits: a(1), b(1), b'(1) and c(10-14). The alpha and beta chains form an alternating ring which encloses part of the gamma chain. F(1) is attached to F(0) by a central stalk formed by the gamma and epsilon chains, while a peripheral stalk is formed by the delta, b and b' chains.

It is found in the cellular thylakoid membrane. Functionally, f(1)F(0) ATP synthase produces ATP from ADP in the presence of a proton or sodium gradient. F-type ATPases consist of two structural domains, F(1) containing the extramembraneous catalytic core and F(0) containing the membrane proton channel, linked together by a central stalk and a peripheral stalk. During catalysis, ATP synthesis in the catalytic domain of F(1) is coupled via a rotary mechanism of the central stalk subunits to proton translocation. In terms of biological role, key component of the F(0) channel; it plays a direct role in translocation across the membrane. A homomeric c-ring of between 10-14 subunits forms the central stalk rotor element with the F(1) delta and epsilon subunits. This is ATP synthase subunit c from Prochlorococcus marinus (strain NATL1A).